The primary structure comprises 622 residues: Dehydrogenase xptC (622 aa).

The first 18 residues, 1-18 (MAKLSVILLFRSLLLCGA), serve as a signal peptide directing secretion. FAD-binding positions include 47–48 (VS), 68–69 (EA), and 123–126 (NAMI). 5 N-linked (GlcNAc...) asparagine glycosylation sites follow: Asn160, Asn173, Asn357, Asn364, and Asn480. Position 598-599 (598-599 (PM)) interacts with FAD.

The protein belongs to the GMC oxidoreductase family. As to quaternary structure, homodimer. FAD is required as a cofactor.

It functions in the pathway secondary metabolite biosynthesis. Dehydrogenase involved in the conversion of monodictyphenone to the prenyl xanthones such as emericellin, shamixanthone and epishamixanthone. Monodictyphenone is first converted to variecoxanthone A via a paeciloxanthone intermediate by the consecutive actions of the FAD-dependent monooxygenase mdpD and the xanthone prenyltransferase xptB. XptB catalyzes regular O-prenylation at the hydroxy group of C-7 of the xanthone ring. Variecoxanthone A is further prenylated to emericellin by xptA before being reduced to shamixanthone and epishamixanthone by the dehydrogenase xptC. The chain is Dehydrogenase xptC from Emericella nidulans (strain FGSC A4 / ATCC 38163 / CBS 112.46 / NRRL 194 / M139) (Aspergillus nidulans).